Consider the following 698-residue polypeptide: Sucrose non-fermenting protein kinase 1 (698 aa).

The tract at residues 1–48 is disordered; the sequence is MAPRGFEDEELTISLSSSHVRRPQQQQPPPPTQQQHAHQPGSRPADAP. One can recognise a Protein kinase domain in the interval 62-313; it reads YKVLRTLGEG…IEDIRADPWF (252 aa). ATP-binding positions include 68-76 and Lys-91; that span reads LGEGSFGKV. Asp-184 acts as the Proton acceptor in catalysis. An auto-inhibitory domain (AID) region spans residues 320–417; it reads YLQLPVEEFF…ALLEPEGSSP (98 aa). In terms of domain architecture, UBA spans 360–397; the sequence is VTEKISKTMGYGKNDVEEALQASEPSAIKDAYMIVREN. Disordered stretches follow at residues 410-435, 482-525, and 564-597; these read LEPEGSSPMLSMSSARSATSTTTTTA, TRTD…KKTK, and ESRHAEERAEASGNGSFADSYDGSRGSTTSIDPM. The span at 415–435 shows a compositional bias: low complexity; sequence SSPMLSMSSARSATSTTTTTA. 2 stretches are compositionally biased toward basic and acidic residues: residues 484–493 and 564–573; these read TDAEKEETSR and ESRHAEERAE.

The protein belongs to the protein kinase superfamily. CAMK Ser/Thr protein kinase family. SNF1 subfamily. Component of the AMP-activated protein kinase complex also known as the SNF1 kinase complex (Snf1c), a heterotrimeric complex composed of a catalytic subunit alpha and 2 regulatory subunits beta and gamma.

It is found in the cytoplasm. Its subcellular location is the nucleus. It carries out the reaction L-seryl-[protein] + ATP = O-phospho-L-seryl-[protein] + ADP + H(+). The catalysed reaction is L-threonyl-[protein] + ATP = O-phospho-L-threonyl-[protein] + ADP + H(+). In terms of biological role, catalytic subunit of the AMP-activated protein kinase complex also known as the SNF1 kinase complex (Snf1c), a central regulator of cellular energy homeostasis, which, in response to a fall in intracellular ATP levels, activates energy-producing pathways and inhibits energy-consuming processes. The complex phosphorylates histone H3 to form H3S10ph, which promotes H3K14ac formation, leading to transcriptional activation through TBP recruitment to the promoters. Activates the expression of the galactose oxidase (GOA) gene and of several cell wall-degrading enzymes (CWDEs) such as pectate lyase, xylanase and glucanase. Plays an important role in sudden death syndrome (SDS) by controlling the colonization of the infected roots. This Fusarium virguliforme protein is Sucrose non-fermenting protein kinase 1.